A 118-amino-acid chain; its full sequence is Small ribosomal subunit protein uS13 (118 aa).

The segment at 93 to 118 (RSLPVRGQRSKTNARTRKGPRKPIKK) is disordered.

Belongs to the universal ribosomal protein uS13 family. As to quaternary structure, part of the 30S ribosomal subunit. Forms a loose heterodimer with protein S19. Forms two bridges to the 50S subunit in the 70S ribosome.

Functionally, located at the top of the head of the 30S subunit, it contacts several helices of the 16S rRNA. In the 70S ribosome it contacts the 23S rRNA (bridge B1a) and protein L5 of the 50S subunit (bridge B1b), connecting the 2 subunits; these bridges are implicated in subunit movement. Contacts the tRNAs in the A and P-sites. The chain is Small ribosomal subunit protein uS13 from Teredinibacter turnerae (strain ATCC 39867 / T7901).